Reading from the N-terminus, the 154-residue chain is Neurotrophin-3 (154 aa).

An N-terminal signal peptide occupies residues 1-18; it reads MSILFYVMFLAYLRGVQG. A propeptide spanning residues 19–134 is cleaved from the precursor; it reads NSMDQRSLPE…VNSRSPRRKR (116 aa).

The protein belongs to the NGF-beta family.

Its subcellular location is the secreted. Functionally, seems to promote the survival of visceral and proprioceptive sensory neurons. The protein is Neurotrophin-3 (NTF3) of Cervus elaphus (Red deer).